A 36-amino-acid polypeptide reads, in one-letter code: Photosystem I reaction center subunit VIII (36 aa).

A helical membrane pass occupies residues 9-29; that stretch reads IFVPLVGLVFPAVAMASLFLY.

This sequence belongs to the PsaI family.

The protein localises to the plastid. Its subcellular location is the chloroplast thylakoid membrane. In terms of biological role, may help in the organization of the PsaL subunit. The protein is Photosystem I reaction center subunit VIII of Ostreococcus tauri.